Here is a 1040-residue protein sequence, read N- to C-terminus: Multidrug resistance protein MdtB (1040 aa).

Helical transmembrane passes span 16 to 36 (FIMR…AGII), 347 to 367 (LMMA…NIPA), 369 to 389 (IIPG…MVFL), 396 to 416 (LTLM…IVVI), 440 to 460 (IGFT…PLLF), 472 to 492 (FAIT…TLTP), 537 to 557 (WLTL…WVFI), 863 to 883 (LGST…VLGI), 888 to 908 (FIHP…ALLA), 911 to 931 (IAGS…IGIV), 968 to 988 (ILMT…STGV), and 998 to 1018 (IGMV…TPVI).

Belongs to the resistance-nodulation-cell division (RND) (TC 2.A.6) family. MdtB subfamily. In terms of assembly, part of a tripartite efflux system composed of MdtA, MdtB and MdtC. MdtB forms a heteromultimer with MdtC.

The protein resides in the cell inner membrane. The protein is Multidrug resistance protein MdtB of Shigella boydii serotype 4 (strain Sb227).